A 364-amino-acid chain; its full sequence is Probable endopolygalacturonase B (364 aa).

The first 20 residues, 1–20 (MHFFQSSLVAATMGAALVAA), serve as a signal peptide directing secretion. Positions 21–29 (APAADLETR) are excised as a propeptide. A disulfide bridge connects residues cysteine 32 and cysteine 47. Residues asparagine 138 and asparagine 141 are each glycosylated (N-linked (GlcNAc...) asparagine). PbH1 repeat units lie at residues 159–188 (SDHL…DVGS), 189–210 (STYI…AVNS), 211–231 (GEHI…SIGS), 240–261 (VNDV…RIKT), 269–291 (VTGV…VVQQ), and 303–324 (TNGV…TSSA). Aspartate 203 (proton donor) is an active-site residue. A disulfide bridge connects residues cysteine 205 and cysteine 221. Residue histidine 225 is part of the active site. The cysteines at positions 331 and 336 are disulfide-linked. Asparagine 338 is a glycosylation site (N-linked (GlcNAc...) asparagine). Cysteines 355 and 364 form a disulfide.

Belongs to the glycosyl hydrolase 28 family.

It localises to the secreted. It catalyses the reaction (1,4-alpha-D-galacturonosyl)n+m + H2O = (1,4-alpha-D-galacturonosyl)n + (1,4-alpha-D-galacturonosyl)m.. Involved in maceration and soft-rotting of plant tissue. Hydrolyzes the 1,4-alpha glycosidic bonds of de-esterified pectate in the smooth region of the plant cell wall. The chain is Probable endopolygalacturonase B (pgaB) from Aspergillus fumigatus (strain ATCC MYA-4609 / CBS 101355 / FGSC A1100 / Af293) (Neosartorya fumigata).